The primary structure comprises 88 residues: Small ribosomal subunit protein uS17 (88 aa).

It belongs to the universal ribosomal protein uS17 family. Part of the 30S ribosomal subunit.

Functionally, one of the primary rRNA binding proteins, it binds specifically to the 5'-end of 16S ribosomal RNA. This chain is Small ribosomal subunit protein uS17, found in Nitratidesulfovibrio vulgaris (strain DSM 19637 / Miyazaki F) (Desulfovibrio vulgaris).